We begin with the raw amino-acid sequence, 388 residues long: Chorismate synthase (388 aa).

Positions 39 and 45 each coordinate NADP(+). FMN contacts are provided by residues 130 to 132 (RSS), 251 to 252 (NA), G296, 311 to 315 (KPIPT), and R337.

It belongs to the chorismate synthase family. As to quaternary structure, homotetramer. Requires FMNH2 as cofactor.

It catalyses the reaction 5-O-(1-carboxyvinyl)-3-phosphoshikimate = chorismate + phosphate. The protein operates within metabolic intermediate biosynthesis; chorismate biosynthesis; chorismate from D-erythrose 4-phosphate and phosphoenolpyruvate: step 7/7. Catalyzes the anti-1,4-elimination of the C-3 phosphate and the C-6 proR hydrogen from 5-enolpyruvylshikimate-3-phosphate (EPSP) to yield chorismate, which is the branch point compound that serves as the starting substrate for the three terminal pathways of aromatic amino acid biosynthesis. This reaction introduces a second double bond into the aromatic ring system. In Streptococcus agalactiae serotype V (strain ATCC BAA-611 / 2603 V/R), this protein is Chorismate synthase.